Consider the following 518-residue polypeptide: Sensor protein kinase HptS (518 aa).

The next 2 membrane-spanning stretches (helical) occupy residues 20 to 40 and 222 to 242; these read IFPV…IYIW and GITL…FGFI. The region spanning 297–513 is the Histidine kinase domain; sequence EQLIHSIEHT…LICYKIPLSR (217 aa). His325 carries the phosphohistidine; by autocatalysis modification.

Post-translationally, autophosphorylated.

The protein resides in the cell membrane. The enzyme catalyses ATP + protein L-histidine = ADP + protein N-phospho-L-histidine.. Member of the two-component regulatory system HptS/HptR that regulates genes involved in hexose phosphate transport system in response to changes in extracellular phosphate sources. May act as a sensor protein kinase which is autophosphorylated at a histidine residue and transfers its phosphate group to the conserved aspartic acid residue in the regulatory domain of HptS. In turn, HptS antagonizes CcpA-dependent transcription of a subset of CcpA-regulated genes involved in antibiotic susceptibility. The chain is Sensor protein kinase HptS (hptS) from Staphylococcus aureus (strain Mu50 / ATCC 700699).